The sequence spans 158 residues: 2-C-methyl-D-erythritol 2,4-cyclodiphosphate synthase (158 aa).

Residues D8 and H10 each contribute to the a divalent metal cation site. Residues 8–10 (DVH) and 34–35 (HS) contribute to the 4-CDP-2-C-methyl-D-erythritol 2-phosphate site. H42 provides a ligand contact to a divalent metal cation. 4-CDP-2-C-methyl-D-erythritol 2-phosphate is bound by residues 56 to 58 (DIG), 61 to 65 (FPDTD), 100 to 106 (AQKPKML), 132 to 135 (TTEE), and F139.

Belongs to the IspF family. As to quaternary structure, homotrimer. The cofactor is a divalent metal cation.

The enzyme catalyses 4-CDP-2-C-methyl-D-erythritol 2-phosphate = 2-C-methyl-D-erythritol 2,4-cyclic diphosphate + CMP. It functions in the pathway isoprenoid biosynthesis; isopentenyl diphosphate biosynthesis via DXP pathway; isopentenyl diphosphate from 1-deoxy-D-xylulose 5-phosphate: step 4/6. Involved in the biosynthesis of isopentenyl diphosphate (IPP) and dimethylallyl diphosphate (DMAPP), two major building blocks of isoprenoid compounds. Catalyzes the conversion of 4-diphosphocytidyl-2-C-methyl-D-erythritol 2-phosphate (CDP-ME2P) to 2-C-methyl-D-erythritol 2,4-cyclodiphosphate (ME-CPP) with a corresponding release of cytidine 5-monophosphate (CMP). The chain is 2-C-methyl-D-erythritol 2,4-cyclodiphosphate synthase from Clostridium beijerinckii (strain ATCC 51743 / NCIMB 8052) (Clostridium acetobutylicum).